A 144-amino-acid chain; its full sequence is MNFKYIVAVSFLIASAYARSVQNDEQSLSQRDVLEEESLREIRGIGGKILSGLKTALKGAAKELASTYLHRKRTAEEHEVMKRLEAVMRDLDSLDYPEEASERETRGFNQDEIANLFTKKEKRILGPVLGLVGSALGGLIKKIG.

Positions 1–18 (MNFKYIVAVSFLIASAYA) are cleaved as a signal peptide. 2 propeptides span residues 19-43 (RSVQNDEQSLSQRDVLEEESLREIR) and 73-122 (RTAE…KKEK). The residue at position 143 (Ile-143) is an Isoleucine amide.

Belongs to the bombinin family. In terms of tissue distribution, expressed by the skin glands.

Its subcellular location is the secreted. Functionally, maximin-3 shows antibacterial activity against both Gram-positive and Gram-negative bacteria. It also shows antimicrobial activity against the fungus C.albicans, but not against A.flavus nor P.uticale. It has little hemolytic activity. It possess a significant cytotoxicity against tumor cell lines. It possess a significant anti-HIV activity. It shows high spermicidal activity. Maximin-H11 shows antimicrobial activity against bacteria and against the fungus C.albicans. Shows strong hemolytic activity. This Bombina maxima (Giant fire-bellied toad) protein is Maximins 3/H11 type 1.